The sequence spans 274 residues: Kit ligand (274 aa).

Residues 1 to 25 form the signal peptide; that stretch reads MKKTQTWIVTCIYLQLLLFNPLVKT. Over 26 to 215 the chain is Extracellular; it reads KGLCRNRVTD…TNPIEDSSIQ (190 aa). Cystine bridges form between Cys-29–Cys-114 and Cys-68–Cys-164. 4 N-linked (GlcNAc...) asparagine glycosylation sites follow: Asn-90, Asn-97, Asn-145, and Asn-196. A helical membrane pass occupies residues 216 to 238; the sequence is WAVMALPACFSLVIGFAFGAFYW. Residues 239–274 are Cytoplasmic-facing; sequence KKKQPNLTRTVENIQINEEDNEISMLQEKEREFQEV.

This sequence belongs to the SCF family. As to quaternary structure, homodimer, non-covalently linked. A soluble form is produced by proteolytic processing of isoform 1 in the extracellular domain.

The protein resides in the cell membrane. It is found in the secreted. Its subcellular location is the cytoplasm. The protein localises to the cytoskeleton. It localises to the cell projection. The protein resides in the lamellipodium. It is found in the filopodium. Stimulates the proliferation of mast cells. Able to augment the proliferation of both myeloid and lymphoid hematopoietic progenitors in bone marrow culture. Also mediates cell-cell adhesion. Acts synergistically with other cytokines, probably interleukins. The chain is Kit ligand (KITLG) from Felis catus (Cat).